A 223-amino-acid chain; its full sequence is Sigma non-opioid intracellular receptor 1 (223 aa).

Residues 1-9 (MQWALGRRW) are Lumenal-facing. The tract at residues 2–8 (QWALGRR) is targeting to endoplasmic reticulum-associated lipid droplets. A helical membrane pass occupies residues 10–30 (VWAALLLAAAAVLTQVVWLWL). Residues 31 to 223 (GTQSFVFQHE…FTTYLFGQDS (193 aa)) lie on the Cytoplasmic side of the membrane. The segment at 99–106 (SLSEYVLL) is important for ligand-binding. Residues 177–223 (VIPSTLAFALADTIFSTQDFLTLFYTLRAYARGLRLEFTTYLFGQDS) form a C-terminal hydrophobic region region.

The protein belongs to the ERG2 family. In terms of assembly, homotrimer. Forms a ternary complex with ANK2 and ITPR3. The complex is disrupted by agonists. Interacts with KCNA4. Interacts with KCNA2; cocaine consumption leads to increased interaction. Interacts with RNF112 in an oxidative stress-regulated manner.

The protein resides in the nucleus inner membrane. It is found in the nucleus outer membrane. The protein localises to the nucleus envelope. Its subcellular location is the cytoplasmic vesicle. It localises to the endoplasmic reticulum membrane. The protein resides in the membrane. It is found in the lipid droplet. The protein localises to the cell junction. Its subcellular location is the cell membrane. It localises to the cell projection. The protein resides in the growth cone. It is found in the postsynaptic density membrane. In terms of biological role, functions in lipid transport from the endoplasmic reticulum and is involved in a wide array of cellular functions probably through regulation of the biogenesis of lipid microdomains at the plasma membrane. Involved in the regulation of different receptors it plays a role in BDNF signaling and EGF signaling. Also regulates ion channels like the potassium channel and could modulate neurotransmitter release. Plays a role in calcium signaling through modulation together with ANK2 of the ITP3R-dependent calcium efflux at the endoplasmic reticulum. Plays a role in several other cell functions including proliferation, survival and death. Originally identified for its ability to bind various psychoactive drugs it is involved in learning processes, memory and mood alteration. Necessary for proper mitochondrial axonal transport in motor neurons, in particular the retrograde movement of mitochondria. Plays a role in protecting cells against oxidative stress-induced cell death via its interaction with RNF112. This Mustela erminea (Ermine) protein is Sigma non-opioid intracellular receptor 1 (SIGMAR1).